The sequence spans 331 residues: MAGKSDLPVIARDDNLSEETKTLISSLPTYQDSHVKLCKYQGCWYYHNTLQAVINYQRNFQPQDTDIILASFPKSGTTWLKALSVAIVERSKQPFDDDPLTHPLLSDNPHGIVPFFEFDMYLKTSTPDLTKFSTSSPRLFSTHMPLHTFKEGLKGSPCKVVYMCRNIKDVLISDWHFRSKYSNNEVSRSTLESMFESFCGGVSFYGPFWDHALSYWRGSLENPKHVLFMRYEEMKTEPCVQVKRLAEFLGFPFTKEEEDSGSISKLLELCSLGNLSGLEVNKTGKTWMNYDYKSYFRKGEVGDWKNHLTPEMENKIDMIIEEKLKGSDLKF.

74 to 79 (KSGTTW) contacts 3'-phosphoadenylyl sulfate. The active-site Proton acceptor is the histidine 143. Residues arginine 165, serine 173, tyrosine 231, and 297 to 299 (RKG) contribute to the 3'-phosphoadenylyl sulfate site.

The protein belongs to the sulfotransferase 1 family.

Its subcellular location is the cytoplasm. Functionally, sulfotransferase that utilizes 3'-phospho-5'-adenylyl sulfate (PAPS) as sulfonate donor. The polypeptide is Cytosolic sulfotransferase 1 (SOT1) (Arabidopsis thaliana (Mouse-ear cress)).